We begin with the raw amino-acid sequence, 616 residues long: Telomeric repeat-binding factor 2-interacting protein 1 (616 aa).

In terms of domain architecture, BRCT spans 15–98 (FLDPGGQSMR…QQLDPNDYAI (84 aa)). Positions 112–169 (NQGSGRLGYSSEEDAAILKFIEKRQQDAKGNLVWKEMEKRHVTEHSWQSMKDRFLKHL) constitute a Myb-like domain. A disordered region spans residues 174–518 (ADKPTKKSPI…CSHIRETPEE (345 aa)). Over residues 232–245 (PERASSPPEEPQAA) the composition is skewed to low complexity. Positions 246-255 (GQPSQASSND) are enriched in polar residues. 2 stretches are compositionally biased toward basic and acidic residues: residues 271-288 (ENPR…EHSS) and 344-358 (RSSR…RDIP). Polar residues-rich tracts occupy residues 363 to 382 (EQSS…SDSG) and 397 to 415 (NANS…ASTP). The span at 431–444 (EDSDVMDDSEECEN) shows a compositional bias: acidic residues. Residues 468 to 480 (REPESQAEHHEET) are compositionally biased toward basic and acidic residues. Residues 597-613 (SKFGEEEVTRRKSFLAT) carry the Nuclear localization signal motif.

It belongs to the RAP1 family. As to quaternary structure, homodimer. Component of the shelterin complex (telosome). Interacts with terf2; the interaction is direct.

Its subcellular location is the nucleus. The protein resides in the chromosome. The protein localises to the telomere. Its function is as follows. Acts both as a regulator of telomere function and as a transcription regulator. Involved in the regulation of telomere length and protection as a component of the shelterin complex (telosome). Does not bind DNA directly: recruited to telomeric double-stranded 5'-TTAGGG-3' repeats via its interaction with terf2. Independently of its function in telomeres, also acts as a transcription regulator: recruited to extratelomeric 5'-TTAGGG-3' sites via its association with terf2 or other factors, and regulates gene expression. The protein is Telomeric repeat-binding factor 2-interacting protein 1 (terf2ip) of Danio rerio (Zebrafish).